A 111-amino-acid chain; its full sequence is MGVEKTIITQGSGPSPQVGQKVTMEYTGWLQKEDGTKGDQFDTSVGRGDFVVNIGVGQVIKGWDEGVTQMKLGEKATLHISPDYGYGPRGFPGAIPPNSTLIFDVELKKIG.

Positions 1–20 (MGVEKTIITQGSGPSPQVGQ) are disordered. Residues 7-20 (IITQGSGPSPQVGQ) show a composition bias toward polar residues. A PPIase FKBP-type domain is found at 19-111 (GQKVTMEYTG…IFDVELKKIG (93 aa)).

Belongs to the FKBP-type PPIase family. FKBP1 subfamily.

The protein resides in the cytoplasm. It catalyses the reaction [protein]-peptidylproline (omega=180) = [protein]-peptidylproline (omega=0). With respect to regulation, inhibited by both FK506 and rapamycin. PPIases accelerate the folding of proteins. It catalyzes the cis-trans isomerization of proline imidic peptide bonds in oligopeptides. The polypeptide is FK506-binding protein 1 (FPR1) (Gibberella zeae (strain ATCC MYA-4620 / CBS 123657 / FGSC 9075 / NRRL 31084 / PH-1) (Wheat head blight fungus)).